Consider the following 209-residue polypeptide: MEQQETVKKDDASSARPAKAIVEALLFAAGDEGLSLAQIAAVLDVDESEAKAVIAALQEDYSREERGIQLMELAGVFLLATKKEHASYLKKLVEAPGASSLSQAALETLAIIAYRQPITRAEIEEIRGVKSDKPLQTLMARALIKEVGRAEGTGRPILYGTTAEFLDYFGLKTLEELPPLPEWADDGELEREADLFFEKLAENLSDEKP.

The protein belongs to the ScpB family. In terms of assembly, homodimer. Homodimerization may be required to stabilize the binding of ScpA to the Smc head domains. Component of a cohesin-like complex composed of ScpA, ScpB and the Smc homodimer, in which ScpA and ScpB bind to the head domain of Smc. The presence of the three proteins is required for the association of the complex with DNA.

The protein resides in the cytoplasm. Its function is as follows. Participates in chromosomal partition during cell division. May act via the formation of a condensin-like complex containing Smc and ScpA that pull DNA away from mid-cell into both cell halves. This is Segregation and condensation protein B from Geobacillus thermodenitrificans (strain NG80-2).